The chain runs to 110 residues: uncharacterized protein (110 aa).

A signal peptide spans 1–16 (MKKILLIASMTAGLTA). Residue Cys17 is the site of N-palmitoyl cysteine attachment. The S-diacylglycerol cysteine moiety is linked to residue Cys17.

Its subcellular location is the cell membrane. This is an uncharacterized protein from Salmonella typhimurium (strain LT2 / SGSC1412 / ATCC 700720).